A 266-amino-acid polypeptide reads, in one-letter code: N-acetylneuraminate lyase B (266 aa).

Residues threonine 51 and threonine 52 each coordinate aceneuramate. Tyrosine 143 serves as the catalytic Proton donor. Lysine 173 functions as the Schiff-base intermediate with substrate in the catalytic mechanism. Serine 175, glycine 197, aspartate 199, glutamate 200, and serine 216 together coordinate aceneuramate.

It belongs to the DapA family. NanA subfamily. Homotetramer.

The protein resides in the cytoplasm. The enzyme catalyses aceneuramate = aldehydo-N-acetyl-D-mannosamine + pyruvate. The protein operates within amino-sugar metabolism; N-acetylneuraminate degradation. Functionally, catalyzes the cleavage of N-acetylneuraminic acid (sialic acid) to form pyruvate and N-acetylmannosamine via a Schiff base intermediate. It prevents sialic acids from being recycled and returning to the cell surface. Involved in the N-glycolylneuraminic acid (Neu5Gc) degradation pathway. The protein is N-acetylneuraminate lyase B (npl-b) of Xenopus laevis (African clawed frog).